Reading from the N-terminus, the 331-residue chain is MDEKTKIYDITIIGGGPVGLFAAFYAGMRNASVKIIESLPQLGGQLSTLYPEKYIYDIPGYPSVRAQELVNNLIQQMKPFDPTVALEEAVQSVEKQVDGTFEIITKKDTHYSKAIIITAGNGAFEPRRLDLPEAEQYEGTNIHYFINDLSRFSGRRVAVCGGGDSAVDWALMLEKVASSVAIVHRRNAFRAHEHSVNNLEKSSIAIKTPFIPTEVLGNGDKLTHITLQEVKGDTTETLEIDDFIINYGFVSSLGPIKNWGLELERNSIVVNSKMETSIPGIYCAGDICTYDGKVKLIATGFGEAPTAVNNAMNFIDPKTRVQPMHSTSLFE.

Residues Glu-37, Gln-45, Tyr-50, Val-90, Phe-124, Asp-286, and Thr-327 each contribute to the FAD site.

It belongs to the ferredoxin--NADP reductase type 2 family. As to quaternary structure, homodimer. FAD is required as a cofactor.

It catalyses the reaction 2 reduced [2Fe-2S]-[ferredoxin] + NADP(+) + H(+) = 2 oxidized [2Fe-2S]-[ferredoxin] + NADPH. The polypeptide is Ferredoxin--NADP reductase 2 (Listeria monocytogenes serovar 1/2a (strain ATCC BAA-679 / EGD-e)).